The sequence spans 578 residues: Zinc finger-containing ubiquitin peptidase 1 (578 aa).

Residues 2 to 24 (LSCDICGETVTSEPDMKAHLIVH) form a C2H2-type 1 zinc finger. The C2H2-type 2; atypical zinc finger occupies 29–52 (IVCPFCKLSGVSYDEMCFHIETAH). 2 C2H2-type zinc fingers span residues 154-177 (PECP…KTTH) and 193-215 (YDCP…VDLH). Positions 226–248 (DRVQCSGDLQLAHQLQQEEDRKR) are MIU. The zUBD/ZHA stretch occupies residues 249–274 (RSEESRQEIEEFQKLQRQYGLDNSGG). K262 carries the N6-acetyllysine modification. C360 functions as the Nucleophile in the catalytic mechanism. Residue H491 is the Proton acceptor of the active site. D512 is an active-site residue.

It belongs to the peptidase C78 family. ZUFSP subfamily. As to quaternary structure, interacts with RPA1 and RPA2.

The protein localises to the cytoplasm. The protein resides in the nucleus. It carries out the reaction Thiol-dependent hydrolysis of ester, thioester, amide, peptide and isopeptide bonds formed by the C-terminal Gly of ubiquitin (a 76-residue protein attached to proteins as an intracellular targeting signal).. Deubiquitinase with endodeubiquitinase activity that specifically interacts with and cleaves 'Lys-63'-linked long polyubiquitin chains. Shows only weak activity against 'Lys-11' and 'Lys-48'-linked chains. Plays an important role in genome stability pathways, functioning to prevent spontaneous DNA damage and also promote cellular survival in response to exogenous DNA damage. Modulates the ubiquitination status of replication protein A (RPA) complex proteins in response to replication stress. This Macaca fascicularis (Crab-eating macaque) protein is Zinc finger-containing ubiquitin peptidase 1.